A 678-amino-acid chain; its full sequence is Sulfoquinovosidase (678 aa).

The a 6-sulfo-alpha-D-quinovosyldiacylglycerol site is built by glutamine 288, arginine 301, valine 302, and tryptophan 304. Catalysis depends on aspartate 405, which acts as the Nucleophile. Glutamate 408 is a catalytic residue. The Proton donor role is filled by aspartate 472. Histidine 537 is an a 6-sulfo-alpha-D-quinovosyldiacylglycerol binding site.

It belongs to the glycosyl hydrolase 31 family.

It carries out the reaction a 6-sulfo-alpha-D-quinovosyldiacylglycerol + H2O = 6-sulfo-alpha-D-quinovose + a 1,2-diacyl-sn-glycerol. The catalysed reaction is 3-(6-sulfo-alpha-D-quinovosyl)glycerol + H2O = 6-sulfo-alpha-D-quinovose + glycerol. Its pathway is glycolipid metabolism. Is inactivated in vitro by the mechanism-based inactivator 5-fluoro-beta-L-idopyranosyl fluoride (5FIdoF) that yields a covalent glycosyl-enzyme complex with the active site nucleophile Asp-405. In terms of biological role, catalyzes the hydrolysis of sulfoquinovosyl diacylglycerides (SQDG) to sulfoquinovose (SQ), which is then degraded by E.coli through the SQ Embden-Meyerhof-Parnas (SQ-EMP) sulfoglycolysis pathway as a source of carbon and sulfur. Therefore, is likely involved in the utilization of the sulfoquinovose headgroup found in ubiquitous plant sulfolipids. Is also able to hydrolyze simple sulfoquinovosides such as sulfoquinovosyl glycerol (SQGro). In vitro, can use the substrate analog para-nitrophenyl alpha-sulfoquinovoside (PNPSQ), but shows no detectable activity toward 4-nitrophenyl alpha-D-glucopyranoside (PNPGlc). Is a retaining glycoside hydrolase, since it forms the alpha anomer of SQ. Also exhibits some alpha-glucosidase activity against alpha-glucosyl fluoride in vitro, although natural substrates, such as alpha-glucobioses are scarcely hydrolyzed. This Escherichia coli (strain K12) protein is Sulfoquinovosidase.